We begin with the raw amino-acid sequence, 237 residues long: Pre-protein VI (237 aa).

A propeptide spanning residues 1 to 32 (MDDPFSTLAPRRGTQPLLSNWATIGISELHGG) is cleaved from the precursor. Residues 33–57 (ALGWGSWWSNLSRLGSSFGSNLKNL) are amphipathic alpha-helix essential for membrane lytic activity. The involved in endosomal membrane lysis stretch occupies residues 35–56 (GWGSWWSNLSRLGSSFGSNLKN). The interval 51–77 (GSNLKNLGLKAWNSSTGQALRQHLKDT) is interaction with hexon protein. Residues 70 to 79 (LRQHLKDTNL) carry the Nuclear export signal motif. Residue Thr146 is modified to Phosphothreonine; by host. The Nuclear export signal signature appears at 218 to 229 (GTLDSIMGLGLQ). Positions 220 to 226 (LDSIMGL) are interaction with hexon protein. The interval 227–237 (GLQPIKRRRCF) is binds to importin alpha/beta, involved in hexon nuclear import. The Nuclear localization signal signature appears at 232–235 (KRRR).

It belongs to the adenoviridae protein VI family. As to quaternary structure, interacts with hexon protein; this interaction allows nuclear import of hexon trimers and possibly pre-capsid assembly. Interacts (via C-terminal NLS) with importin alpha/beta. In terms of assembly, interacts (via PPxY motif) with host NEDD4 ubiquitine ligase; this interaction might play a role in virus intracellular transport during entry. Part of a complex composed of the core-capsid bridging protein, the endosome lysis protein VI and the hexon-linking protein VIII; these interactions bridge the virus core to the capsid. Interacts with peripentonal hexons; this interaction stabilizes the capsid by gluing two peripentonal hexons together and joining them with an adjacent group-of-nine hexon. Heterodimer with the viral protease; disulfide-linked. Interacts with the viral protease. In terms of processing, ubiquitinated by Nedd4 following partial capsid disassembly; which might play a role in intracellular virus movement during entry. Contains the major nuclear import and export signals. Proteolytically removed during virion maturation. The processing of the C-terminus turns the precursor into a mature viral structural protein and abrogates its ability to promote hexon import and act as a potential chaperone protein.

The protein resides in the host nucleus. It localises to the host cytoplasm. It is found in the virion. Its function is as follows. During virus assembly, promotes hexon trimers nuclear import through nuclear pore complexes via an importin alpha/beta-dependent mechanism. By analogy to herpesviruses capsid assembly, might act as a chaperone to promote the formation of the icosahedral capsid. Structural component of the virion that provides increased stability to the particle shell through its interaction with the core-capsid bridging protein and the hexon-linking protein VIII. Fibers shedding during virus entry into host cell allows the endosome lysis protein to be exposed as a membrane-lytic peptide. Exhibits pH-independent membrane fragmentation activity and probably mediates viral rapid escape from host endosome via organellar membrane lysis. It is not clear if it then remains partially associated with the capsid and involved in the intracellular microtubule-dependent transport of capsid to the nucleus, or if it is lost during endosomal penetration. In terms of biological role, cofactor that activates the viral protease. Binds to viral protease in a 1:1 ratio. In Mus musculus (Mouse), this protein is Pre-protein VI.